Consider the following 350-residue polypeptide: MVASSQKILVTGGAGFIGTHTVVQLLNNGFNVSIIDNFDNSVMEAVERVREVVGSNLSQNLEFTLGDLRNKDDLEKLFSKSKFDAVIHFAGLKAVGESVENPRRYFDNNLVGTINLYEVMAKHNCKKMVFSSSATVYGQPEKIPCVEDFKLQAMNPYGRTKLFLEEIARDIQKAEPEWRIVLLRYFNPVGAHESGKLGEDPRGIPNNLMPYIQQVAVGRLPELNVYGHDYPTRDGSAIRDYIHVMDLADGHIAALRKLFTSENIGCTAYNLGTGRGSSVLEMVAAFEKASGKKIALKLCPRRPGDATEVYASTAKAEKELGWKAKYGVEEMCRDQWNWAKNNPWGYSGKP.

NAD(+)-binding positions include 15–17, 36–40, 67–68, Phe89, and Lys93; these read GFI, DNFDN, and DL. Residue Ser133 participates in substrate binding. Catalysis depends on Tyr157, which acts as the Proton acceptor. NAD(+)-binding residues include Lys161 and Tyr185.

It belongs to the NAD(P)-dependent epimerase/dehydratase family. NAD(+) serves as cofactor.

It catalyses the reaction UDP-alpha-D-glucose = UDP-alpha-D-galactose. It carries out the reaction UDP-beta-L-arabinopyranose = UDP-alpha-D-xylose. It functions in the pathway carbohydrate metabolism; galactose metabolism. Its pathway is nucleotide-sugar biosynthesis; UDP-L-arabinose biosynthesis; UDP-L-arabinose from UDP-alpha-D-xylose: step 1/1. The protein operates within cell wall biogenesis; cell wall polysaccharide biosynthesis. Its activity is regulated as follows. Inhibited by Hg(2+). Its function is as follows. Catalyzes the interconversion between UDP-glucose and UDP-galactose and the interconversion between UDP-arabinose and UDP-xylose. This is Bifunctional UDP-glucose 4-epimerase and UDP-xylose 4-epimerase 1 from Pisum sativum (Garden pea).